The primary structure comprises 326 residues: tRNA U34 carboxymethyltransferase (326 aa).

Residues K91, W105, K110, G130, M196, Y200, and R315 each contribute to the carboxy-S-adenosyl-L-methionine site.

Belongs to the class I-like SAM-binding methyltransferase superfamily. CmoB family. Homotetramer.

The catalysed reaction is carboxy-S-adenosyl-L-methionine + 5-hydroxyuridine(34) in tRNA = 5-carboxymethoxyuridine(34) in tRNA + S-adenosyl-L-homocysteine + H(+). Its function is as follows. Catalyzes carboxymethyl transfer from carboxy-S-adenosyl-L-methionine (Cx-SAM) to 5-hydroxyuridine (ho5U) to form 5-carboxymethoxyuridine (cmo5U) at position 34 in tRNAs. This chain is tRNA U34 carboxymethyltransferase, found in Tolumonas auensis (strain DSM 9187 / NBRC 110442 / TA 4).